Reading from the N-terminus, the 100-residue chain is Nucleoid-associated protein HPSH_00175 (100 aa).

The protein belongs to the YbaB/EbfC family. As to quaternary structure, homodimer.

It is found in the cytoplasm. The protein resides in the nucleoid. Its function is as follows. Binds to DNA and alters its conformation. May be involved in regulation of gene expression, nucleoid organization and DNA protection. The polypeptide is Nucleoid-associated protein HPSH_00175 (Helicobacter pylori (strain Shi470)).